A 172-amino-acid chain; its full sequence is Antibacterial protein PR-39 (172 aa).

Positions 1-29 (METQRASLCLGRWSLWLLLLGLVVPSASA) are cleaved as a signal peptide. Q30 bears the Pyrrolidone carboxylic acid mark. The propeptide occupies 30 to 130 (QALSYREAVL…DISCNEIQSV (101 aa)). The segment at 61 to 80 (DQPPKADEDPGTPKPVSFTV) is disordered. Cystine bridges form between C85–C96 and C107–C124. The segment at 130 to 172 (VRRRPRPPYLPRPRPPPFFPPRLPPRIPPGFPPRFPPRFPGKR) is disordered. The segment covering 136–172 (PPYLPRPRPPPFFPPRLPPRIPPGFPPRFPPRFPGKR) has biased composition (pro residues). At P169 the chain carries Proline amide.

It belongs to the cathelicidin family. In terms of tissue distribution, small intestine and bone marrow.

The protein localises to the secreted. Exerts a potent antimicrobial activity against both E.coli and B.megaterium. This is Antibacterial protein PR-39 (PR39) from Sus scrofa (Pig).